We begin with the raw amino-acid sequence, 120 residues long: Ribonuclease P protein component (120 aa).

Belongs to the RnpA family. As to quaternary structure, consists of a catalytic RNA component (M1 or rnpB) and a protein subunit.

The catalysed reaction is Endonucleolytic cleavage of RNA, removing 5'-extranucleotides from tRNA precursor.. Functionally, RNaseP catalyzes the removal of the 5'-leader sequence from pre-tRNA to produce the mature 5'-terminus. It can also cleave other RNA substrates such as 4.5S RNA. The protein component plays an auxiliary but essential role in vivo by binding to the 5'-leader sequence and broadening the substrate specificity of the ribozyme. This is Ribonuclease P protein component from Dehalococcoides mccartyi (strain ATCC BAA-2266 / KCTC 15142 / 195) (Dehalococcoides ethenogenes (strain 195)).